The sequence spans 151 residues: 3-hydroxyacyl-[acyl-carrier-protein] dehydratase FabZ (151 aa).

His57 is a catalytic residue.

The protein belongs to the thioester dehydratase family. FabZ subfamily.

It is found in the cytoplasm. The catalysed reaction is a (3R)-hydroxyacyl-[ACP] = a (2E)-enoyl-[ACP] + H2O. In terms of biological role, involved in unsaturated fatty acids biosynthesis. Catalyzes the dehydration of short chain beta-hydroxyacyl-ACPs and long chain saturated and unsaturated beta-hydroxyacyl-ACPs. This Tolumonas auensis (strain DSM 9187 / NBRC 110442 / TA 4) protein is 3-hydroxyacyl-[acyl-carrier-protein] dehydratase FabZ.